The following is a 349-amino-acid chain: tRNA pseudouridine synthase D (349 aa).

Phe27 contacts substrate. The active-site Nucleophile is Asp80. Asn129 contributes to the substrate binding site. The TRUD domain maps to 155-303 (GVPNYFGAQR…VEAARRAMLL (149 aa)). Residue Phe329 coordinates substrate.

This sequence belongs to the pseudouridine synthase TruD family.

It catalyses the reaction uridine(13) in tRNA = pseudouridine(13) in tRNA. Its function is as follows. Responsible for synthesis of pseudouridine from uracil-13 in transfer RNAs. The chain is tRNA pseudouridine synthase D from Escherichia coli O9:H4 (strain HS).